The chain runs to 303 residues: Mesenteric estrogen-dependent adipogenesis protein (303 aa).

Its subcellular location is the cytoplasm. Functionally, involved in processes that promote adipocyte differentiation, lipid accumulation, and glucose uptake in mature adipocytes. This chain is Mesenteric estrogen-dependent adipogenesis protein (MEDAG), found in Bos taurus (Bovine).